The chain runs to 311 residues: tRNA-cytidine(32) 2-sulfurtransferase (311 aa).

A PP-loop motif motif is present at residues 45–50; the sequence is SGGKDS. [4Fe-4S] cluster contacts are provided by cysteine 120, cysteine 123, and cysteine 211.

The protein belongs to the TtcA family. In terms of assembly, homodimer. The cofactor is Mg(2+). [4Fe-4S] cluster serves as cofactor.

Its subcellular location is the cytoplasm. The enzyme catalyses cytidine(32) in tRNA + S-sulfanyl-L-cysteinyl-[cysteine desulfurase] + AH2 + ATP = 2-thiocytidine(32) in tRNA + L-cysteinyl-[cysteine desulfurase] + A + AMP + diphosphate + H(+). It participates in tRNA modification. In terms of biological role, catalyzes the ATP-dependent 2-thiolation of cytidine in position 32 of tRNA, to form 2-thiocytidine (s(2)C32). The sulfur atoms are provided by the cysteine/cysteine desulfurase (IscS) system. The chain is tRNA-cytidine(32) 2-sulfurtransferase from Shewanella pealeana (strain ATCC 700345 / ANG-SQ1).